Here is a 340-residue protein sequence, read N- to C-terminus: Glyceraldehyde-3-phosphate dehydrogenase (340 aa).

NAD(+) is bound by residues 11 to 12 (TI) and G109. 138–140 (SCN) is a D-glyceraldehyde 3-phosphate binding site. C139 serves as the catalytic Nucleophile. NAD(+) is bound at residue R167. 193 to 194 (HA) provides a ligand contact to D-glyceraldehyde 3-phosphate. An NAD(+)-binding site is contributed by Q300.

The protein belongs to the glyceraldehyde-3-phosphate dehydrogenase family. Homotetramer.

It is found in the cytoplasm. The catalysed reaction is D-glyceraldehyde 3-phosphate + phosphate + NADP(+) = (2R)-3-phospho-glyceroyl phosphate + NADPH + H(+). It catalyses the reaction D-glyceraldehyde 3-phosphate + phosphate + NAD(+) = (2R)-3-phospho-glyceroyl phosphate + NADH + H(+). Its pathway is carbohydrate degradation; glycolysis; pyruvate from D-glyceraldehyde 3-phosphate: step 1/5. The chain is Glyceraldehyde-3-phosphate dehydrogenase from Saccharolobus islandicus (strain M.14.25 / Kamchatka #1) (Sulfolobus islandicus).